Reading from the N-terminus, the 125-residue chain is Small ribosomal subunit protein uS12 (125 aa).

Positions 1-28 are disordered; that stretch reads MPTISQLIGSERKRLTRKTKSPALKSCP. The residue at position 89 (Asp89) is a 3-methylthioaspartic acid. A disordered region spans residues 104–125; the sequence is TAGVKDRRQSRSKYGAKAPKND.

The protein belongs to the universal ribosomal protein uS12 family. Part of the 30S ribosomal subunit. Contacts proteins S8 and S17. May interact with IF1 in the 30S initiation complex.

With S4 and S5 plays an important role in translational accuracy. In terms of biological role, interacts with and stabilizes bases of the 16S rRNA that are involved in tRNA selection in the A site and with the mRNA backbone. Located at the interface of the 30S and 50S subunits, it traverses the body of the 30S subunit contacting proteins on the other side and probably holding the rRNA structure together. The combined cluster of proteins S8, S12 and S17 appears to hold together the shoulder and platform of the 30S subunit. The polypeptide is Small ribosomal subunit protein uS12 (Prochlorococcus marinus subsp. pastoris (strain CCMP1986 / NIES-2087 / MED4)).